Here is a 186-residue protein sequence, read N- to C-terminus: MAETSSLISGVAQRCAGSLFELALDANSVASVEKDLGRFEALLSGSEDLRRLISSPVFSSEDQLHAIGAIADKAGIKGLVGNFLRVVAQNRRLFALPGIIAAFRQIAAEHRGEISADVVSAHELTSAQQNELKATLKGVAGKDVTINVTVDPSILGGLIVKMGSRQIDTSLRTKLSSLKLALKEVG.

The protein belongs to the ATPase delta chain family. F-type ATPases have 2 components, F(1) - the catalytic core - and F(0) - the membrane proton channel. F(1) has five subunits: alpha(3), beta(3), gamma(1), delta(1), epsilon(1). F(0) has three main subunits: a(1), b(2) and c(10-14). The alpha and beta chains form an alternating ring which encloses part of the gamma chain. F(1) is attached to F(0) by a central stalk formed by the gamma and epsilon chains, while a peripheral stalk is formed by the delta and b chains.

The protein resides in the cell inner membrane. Its function is as follows. F(1)F(0) ATP synthase produces ATP from ADP in the presence of a proton or sodium gradient. F-type ATPases consist of two structural domains, F(1) containing the extramembraneous catalytic core and F(0) containing the membrane proton channel, linked together by a central stalk and a peripheral stalk. During catalysis, ATP synthesis in the catalytic domain of F(1) is coupled via a rotary mechanism of the central stalk subunits to proton translocation. Functionally, this protein is part of the stalk that links CF(0) to CF(1). It either transmits conformational changes from CF(0) to CF(1) or is implicated in proton conduction. The chain is ATP synthase subunit delta from Brucella melitensis biotype 2 (strain ATCC 23457).